The chain runs to 287 residues: Bifunctional protein FolD (287 aa).

Residues 160 to 162, serine 189, and isoleucine 230 each bind NADP(+); that span reads GRS.

The protein belongs to the tetrahydrofolate dehydrogenase/cyclohydrolase family. Homodimer.

It carries out the reaction (6R)-5,10-methylene-5,6,7,8-tetrahydrofolate + NADP(+) = (6R)-5,10-methenyltetrahydrofolate + NADPH. The catalysed reaction is (6R)-5,10-methenyltetrahydrofolate + H2O = (6R)-10-formyltetrahydrofolate + H(+). The protein operates within one-carbon metabolism; tetrahydrofolate interconversion. In terms of biological role, catalyzes the oxidation of 5,10-methylenetetrahydrofolate to 5,10-methenyltetrahydrofolate and then the hydrolysis of 5,10-methenyltetrahydrofolate to 10-formyltetrahydrofolate. The protein is Bifunctional protein FolD of Chlamydia felis (strain Fe/C-56) (Chlamydophila felis).